The sequence spans 260 residues: Acetylglutamate kinase (260 aa).

Substrate-binding positions include 41–42 (GG), R63, and N157.

This sequence belongs to the acetylglutamate kinase family. ArgB subfamily.

It localises to the cytoplasm. It carries out the reaction N-acetyl-L-glutamate + ATP = N-acetyl-L-glutamyl 5-phosphate + ADP. It functions in the pathway amino-acid biosynthesis; L-arginine biosynthesis; N(2)-acetyl-L-ornithine from L-glutamate: step 2/4. Functionally, catalyzes the ATP-dependent phosphorylation of N-acetyl-L-glutamate. This Acidobacterium capsulatum (strain ATCC 51196 / DSM 11244 / BCRC 80197 / JCM 7670 / NBRC 15755 / NCIMB 13165 / 161) protein is Acetylglutamate kinase.